We begin with the raw amino-acid sequence, 92 residues long: MTDQPLAGFTHFDAEGRAVMVDVSGKADTERSATARGSVLMQPETLALILQGGVKKGDVLSVARLAGIMGAKRTPDLIPLCHPLMLTSVKVD.

80–82 lines the substrate pocket; sequence LCH.

This sequence belongs to the MoaC family. In terms of assembly, homohexamer; trimer of dimers.

It catalyses the reaction (8S)-3',8-cyclo-7,8-dihydroguanosine 5'-triphosphate = cyclic pyranopterin phosphate + diphosphate. Its pathway is cofactor biosynthesis; molybdopterin biosynthesis. Functionally, catalyzes the conversion of (8S)-3',8-cyclo-7,8-dihydroguanosine 5'-triphosphate to cyclic pyranopterin monophosphate (cPMP). The polypeptide is Cyclic pyranopterin monophosphate synthase (moaC) (Azospirillum brasilense).